Here is a 204-residue protein sequence, read N- to C-terminus: Large ribosomal subunit protein eL15 (204 aa).

The disordered stretch occupies residues Gly-185 to Arg-204. Basic residues predominate over residues Ala-190–Arg-204.

This sequence belongs to the eukaryotic ribosomal protein eL15 family.

The chain is Large ribosomal subunit protein eL15 (RpL15) from Drosophila melanogaster (Fruit fly).